Consider the following 417-residue polypeptide: Glutamyl-tRNA reductase (417 aa).

Substrate-binding positions include 49–52 (TCNR), Ser-105, 110–112 (EPQ), and Gln-116. Cys-50 acts as the Nucleophile in catalysis. Position 185–190 (185–190 (GAGEMI)) interacts with NADP(+).

This sequence belongs to the glutamyl-tRNA reductase family. Homodimer.

The catalysed reaction is (S)-4-amino-5-oxopentanoate + tRNA(Glu) + NADP(+) = L-glutamyl-tRNA(Glu) + NADPH + H(+). Its pathway is porphyrin-containing compound metabolism; protoporphyrin-IX biosynthesis; 5-aminolevulinate from L-glutamyl-tRNA(Glu): step 1/2. Its function is as follows. Catalyzes the NADPH-dependent reduction of glutamyl-tRNA(Glu) to glutamate 1-semialdehyde (GSA). In Azoarcus sp. (strain BH72), this protein is Glutamyl-tRNA reductase.